The primary structure comprises 375 residues: N-acetyldiaminopimelate deacetylase (375 aa).

Residue Asp-69 is part of the active site. Glu-128 serves as the catalytic Proton acceptor.

Belongs to the peptidase M20A family. N-acetyldiaminopimelate deacetylase subfamily.

The enzyme catalyses N-acetyl-(2S,6S)-2,6-diaminopimelate + H2O = (2S,6S)-2,6-diaminopimelate + acetate. It participates in amino-acid biosynthesis; L-lysine biosynthesis via DAP pathway; LL-2,6-diaminopimelate from (S)-tetrahydrodipicolinate (acetylase route): step 3/3. Catalyzes the conversion of N-acetyl-diaminopimelate to diaminopimelate and acetate. The protein is N-acetyldiaminopimelate deacetylase of Priestia megaterium (strain ATCC 12872 / QMB1551) (Bacillus megaterium).